A 508-amino-acid polypeptide reads, in one-letter code: 4-trimethylaminobutyraldehyde dehydrogenase A (508 aa).

NAD(+) contacts are provided by residues K194 and 246–250; that span reads GSVPT. E268 serves as the catalytic Proton acceptor. The active-site Nucleophile is the C302. An NAD(+)-binding site is contributed by E405.

Belongs to the aldehyde dehydrogenase family. In terms of assembly, homotetramer.

It localises to the cytoplasm. It is found in the cytosol. It carries out the reaction 4-(trimethylamino)butanal + NAD(+) + H2O = 4-(trimethylamino)butanoate + NADH + 2 H(+). It catalyses the reaction an aldehyde + NAD(+) + H2O = a carboxylate + NADH + 2 H(+). The protein operates within amine and polyamine biosynthesis; carnitine biosynthesis. Converts gamma-trimethylaminobutyraldehyde into gamma-butyrobetaine with high efficiency (in vitro). Can catalyze the irreversible oxidation of a broad range of aldehydes to the corresponding acids in an NAD-dependent reaction, but with low efficiency. In Danio rerio (Zebrafish), this protein is 4-trimethylaminobutyraldehyde dehydrogenase A (aldh9a1a).